The sequence spans 622 residues: Cilia- and flagella-associated protein 206 (622 aa).

The protein belongs to the CFAP206 family.

Its subcellular location is the cytoplasm. It localises to the cytoskeleton. The protein localises to the cilium axoneme. The protein resides in the cilium basal body. Its function is as follows. Essential for sperm motility and is involved in the regulation of the beating frequency of motile cilia on the epithelial cells of the respiratory tract. Required for the establishment of radial spokes in sperm flagella. This is Cilia- and flagella-associated protein 206 from Rattus norvegicus (Rat).